Consider the following 271-residue polypeptide: Acetyl-coenzyme A carboxylase carboxyl transferase subunit alpha (271 aa).

The region spanning 1–247 is the CoA carboxyltransferase C-terminal domain; the sequence is MSRELIRTAD…KKTILEALGE (247 aa).

This sequence belongs to the AccA family. In terms of assembly, acetyl-CoA carboxylase is a heterohexamer composed of biotin carboxyl carrier protein (AccB), biotin carboxylase (AccC) and two subunits each of ACCase subunit alpha (AccA) and ACCase subunit beta (AccD).

Its subcellular location is the cytoplasm. It catalyses the reaction N(6)-carboxybiotinyl-L-lysyl-[protein] + acetyl-CoA = N(6)-biotinyl-L-lysyl-[protein] + malonyl-CoA. The protein operates within lipid metabolism; malonyl-CoA biosynthesis; malonyl-CoA from acetyl-CoA: step 1/1. In terms of biological role, component of the acetyl coenzyme A carboxylase (ACC) complex. First, biotin carboxylase catalyzes the carboxylation of biotin on its carrier protein (BCCP) and then the CO(2) group is transferred by the carboxyltransferase to acetyl-CoA to form malonyl-CoA. The chain is Acetyl-coenzyme A carboxylase carboxyl transferase subunit alpha from Clostridium perfringens (strain 13 / Type A).